The following is a 369-amino-acid chain: N-methyltransferase imqF (369 aa).

This sequence belongs to the methyltransferase superfamily.

The protein operates within secondary metabolite biosynthesis. N-methyltransferase; part of the gene cluster that mediates the biosynthesis of imizoquins A to D, tripeptide-derived alkaloids that serve a protective role against oxidative stress that are essential for normal germination. ImqB is a canonical three-module NRPS that assembles the tripeptide backbone of the imizoquins via condensation of Trp, Tyr, and Leu-derived precursors. N-methylation by imqF and phenol oxidation by imqC, followed by cyclization via the FAD-dependent oxidase imqH carry out the three-step transformation of L-tyrosine into tetrahydroisoquinoline. Importantly, this sequence requires the presence of a free amine in the tyrosine moiety, indicating that isoquinoline formation occurs prior to peptide bond formation. The imidazolidin-4-one ring of imizoquins could form following additional oxidation of the methyl-derived bridgehead carbon by imqH. Lastly, O-methylation by imqG and leucine hydroxylation by imqE complete biosynthesis of the imizoquins. The protein is N-methyltransferase imqF of Aspergillus flavus (strain ATCC 200026 / FGSC A1120 / IAM 13836 / NRRL 3357 / JCM 12722 / SRRC 167).